The sequence spans 185 residues: MKAVSIEAGERSKAKRVHGVNRGISVFDLVLRIVALVGTLASAVAMGTAGQALSFSTQIVNFEAQYDDIDAFKFFVVSNSITCVYLALSIPISIFHIIRSRAGKSRVLLIVLDAIMLVFLTSGASAAAAIVYLAHNGNTSTNWFSICQQYTDFCQRSAGSLIGSFGAMALMVLLIILSSIALSRR.

At 1-32 the chain is on the cytoplasmic side; it reads MKAVSIEAGERSKAKRVHGVNRGISVFDLVLR. Residues 33–53 traverse the membrane as a helical segment; that stretch reads IVALVGTLASAVAMGTAGQAL. At 54 to 73 the chain is on the extracellular side; it reads SFSTQIVNFEAQYDDIDAFK. The helical transmembrane segment at 74-94 threads the bilayer; it reads FFVVSNSITCVYLALSIPISI. Topologically, residues 95-106 are cytoplasmic; that stretch reads FHIIRSRAGKSR. The chain crosses the membrane as a helical span at residues 107 to 127; the sequence is VLLIVLDAIMLVFLTSGASAA. The Extracellular portion of the chain corresponds to 128-160; sequence AAIVYLAHNGNTSTNWFSICQQYTDFCQRSAGS. A glycan (N-linked (GlcNAc...) asparagine) is linked at Asn-138. The helical transmembrane segment at 161 to 181 threads the bilayer; sequence LIGSFGAMALMVLLIILSSIA. At 182-185 the chain is on the cytoplasmic side; the sequence is LSRR.

This sequence belongs to the Casparian strip membrane proteins (CASP) family. In terms of assembly, homodimer and heterodimers.

It is found in the cell membrane. Its function is as follows. Regulates membrane-cell wall junctions and localized cell wall deposition. Required for establishment of the Casparian strip membrane domain (CSD) and the subsequent formation of Casparian strips, a cell wall modification of the root endodermis that determines an apoplastic barrier between the intraorganismal apoplasm and the extraorganismal apoplasm and prevents lateral diffusion. The protein is Casparian strip membrane protein 1 of Solanum demissum (Wild potato).